Reading from the N-terminus, the 134-residue chain is MSELYRFGISLEKTLIDAFDRHISAQHYKSRSEALRDLIREELLKKQWREGGSVAGAIVMTYDHHKRELLNMLLDIQHDFQETIISTQHVHLDHHHCLEIIAVRGTADQVEKLATQLKVQAGVKHLSLSISTAG.

Positions 78, 89, 91, and 97 each coordinate Ni(2+).

The protein belongs to the transcriptional regulatory CopG/NikR family. Requires Ni(2+) as cofactor.

In terms of biological role, transcriptional regulator. The chain is Putative nickel-responsive regulator from Chlorobium limicola (strain DSM 245 / NBRC 103803 / 6330).